Here is a 607-residue protein sequence, read N- to C-terminus: Phosphogluconate dehydratase (607 aa).

Positions 156 and 223 each coordinate [4Fe-4S] cluster.

The protein belongs to the IlvD/Edd family. [4Fe-4S] cluster serves as cofactor.

It catalyses the reaction 6-phospho-D-gluconate = 2-dehydro-3-deoxy-6-phospho-D-gluconate + H2O. It participates in carbohydrate metabolism; Entner-Doudoroff pathway. Catalyzes the dehydration of 6-phospho-D-gluconate to 2-dehydro-3-deoxy-6-phospho-D-gluconate. The polypeptide is Phosphogluconate dehydratase (Zymomonas mobilis subsp. mobilis (strain ATCC 31821 / ZM4 / CP4)).